Here is a 361-residue protein sequence, read N- to C-terminus: Chorismate synthase (361 aa).

2 residues coordinate NADP(+): arginine 48 and arginine 54. FMN contacts are provided by residues arginine 125 to serine 127, asparagine 238 to alanine 239, glycine 278, lysine 293 to serine 297, and arginine 319.

It belongs to the chorismate synthase family. In terms of assembly, homotetramer. The cofactor is FMNH2.

It catalyses the reaction 5-O-(1-carboxyvinyl)-3-phosphoshikimate = chorismate + phosphate. It functions in the pathway metabolic intermediate biosynthesis; chorismate biosynthesis; chorismate from D-erythrose 4-phosphate and phosphoenolpyruvate: step 7/7. In terms of biological role, catalyzes the anti-1,4-elimination of the C-3 phosphate and the C-6 proR hydrogen from 5-enolpyruvylshikimate-3-phosphate (EPSP) to yield chorismate, which is the branch point compound that serves as the starting substrate for the three terminal pathways of aromatic amino acid biosynthesis. This reaction introduces a second double bond into the aromatic ring system. The sequence is that of Chorismate synthase from Vibrio vulnificus (strain YJ016).